Reading from the N-terminus, the 592-residue chain is Syntaxin-binding protein 3 (592 aa).

The mediates interaction with DOC2B stretch occupies residues 1 to 255 (MAPPVAERGL…STVLHELTFQ (255 aa)).

It belongs to the STXBP/unc-18/SEC1 family. Interacts with DOC2B; the interaction is direct, occurs at the cell membrane, excludes interaction with STX4 and regulates glucose-stimulated insulin secretion. Interacts with STX4. In terms of processing, phosphorylated by PKC in platelets in response to thrombin stimulation; phosphorylation inhibits binding to STX4. As to expression, megakaryocytes and platelets.

Its subcellular location is the cytoplasm. It is found in the cytosol. It localises to the cell membrane. Functionally, together with STX4 and VAMP2, may play a role in insulin-dependent movement of GLUT4 and in docking/fusion of intracellular GLUT4-containing vesicles with the cell surface in adipocytes. The sequence is that of Syntaxin-binding protein 3 (STXBP3) from Homo sapiens (Human).